Reading from the N-terminus, the 185-residue chain is Ribosome-recycling factor (185 aa).

It belongs to the RRF family.

The protein resides in the cytoplasm. Responsible for the release of ribosomes from messenger RNA at the termination of protein biosynthesis. May increase the efficiency of translation by recycling ribosomes from one round of translation to another. This Dehalococcoides mccartyi (strain CBDB1) protein is Ribosome-recycling factor.